Reading from the N-terminus, the 462-residue chain is DNA polymerase delta subunit 3 (462 aa).

Ala-2 is subject to N-acetylalanine. Disordered regions lie at residues 144 to 186, 200 to 230, 254 to 384, and 403 to 462; these read APAE…ASQQ, TKTQ…PGKG, AVKE…RVLK, and SESC…FQKK. Over residues 156-174 the composition is skewed to polar residues; sequence QSNLQAASEAQASELTTNG. The segment covering 204-215 has biased composition (basic and acidic residues); sequence DTNKETKPEARE. Over residues 218–230 the composition is skewed to low complexity; sequence SASSAGGKAPGKG. A Glycyl lysine isopeptide (Lys-Gly) (interchain with G-Cter in SUMO); alternate cross-link involves residue Lys-256. Lys-256 participates in a covalent cross-link: Glycyl lysine isopeptide (Lys-Gly) (interchain with G-Cter in SUMO2); alternate. Lys-259 is covalently cross-linked (Glycyl lysine isopeptide (Lys-Gly) (interchain with G-Cter in SUMO2)). Positions 284–305 are enriched in basic and acidic residues; it reads RKSEPGKVQQKEKSSRGKRVDL. Ser-306 is modified (phosphoserine). Acidic residues predominate over residues 330-344; the sequence is SSEDEVFEDSPEMYE. Positions 348-368 are enriched in pro residues; that stretch reads PSPPPVSPPPDPMPKTEPPPV. 2 positions are modified to phosphoserine: Ser-403 and Ser-405. Thr-407 carries the post-translational modification Phosphothreonine. Ser-409 bears the Phosphoserine mark. Residues 416–427 are compositionally biased toward low complexity; the sequence is KPASAHKPPAAA. Residues 428–437 are compositionally biased toward basic and acidic residues; that stretch reads VKREPREERK. Lys-429 participates in a covalent cross-link: Glycyl lysine isopeptide (Lys-Gly) (interchain with G-Cter in SUMO); alternate. Residue Lys-429 forms a Glycyl lysine isopeptide (Lys-Gly) (interchain with G-Cter in SUMO2); alternate linkage. Positions 451-462 are enriched in polar residues; it reads RQVSITGFFQKK. A PIP-box motif is present at residues 452-459; sequence QVSITGFF. Position 454 is a phosphoserine (Ser-454).

As to quaternary structure, component of both the DNA polymerase delta and DNA polymerase zeta complexes. The tetrameric DNA polymerase delta complex (Pol-delta4), which consists of POLD1/p125, POLD2/p50, POLD3/p66/p68 and POLD4/p12, with POLD1 bearing DNA polymerase and 3' to 5' proofreading exonuclease activities. Within this complex, directly interacts with POLD2. Following stress caused by DNA damaging agents or by replication stress, POLD4 is degraded and Pol-delta4 is converted into a trimeric form of the complex (Pol-delta3), which consists of POLD1, POLD2 and POLD3. Pol-delta3 is the major form occurring at S phase replication sites, as well as DNA damage sites. Directly interacts with PCNA, as do POLD1 and POLD4; this interaction stimulates Pol-delta polymerase activity. POLD3 phosphorylation at Ser-454 impairs PCNA binding. Component of the DNA polymerase zeta complex (POLZ), which consists of REV3L, MAD2L2, POLD2 and POLD3, with REV3L bearing DNA polymerase catalytic activity. The DNA polymerase delta complex interacts with POLDIP2; this interaction is probably mediated through direct binding to POLD2. Ubiquitinated, but not targeted to the proteasome. Sumoylated. Sumoylation by SUMO3 may be predominant. In terms of processing, phosphorylation at Ser-454 is thought to decrease the affinity for PCNA and Pol-delta4 processivity. May be phosphorylated by CDK1-cyclin-A complex, as well as CDK2-cyclin-A and CDK2-cyclin-E complexes. PCNA interferes with CDK-cyclin phosphorylation.

It localises to the cytoplasm. The protein resides in the nucleus. In terms of biological role, accessory component of both the DNA polymerase delta complex and the DNA polymerase zeta complex. As a component of the trimeric and tetrameric DNA polymerase delta complexes (Pol-delta3 and Pol-delta4, respectively), plays a role in high fidelity genome replication, including in lagging strand synthesis, and repair. Required for optimal Pol-delta activity. Stabilizes the Pol-delta complex and plays a major role in Pol-delta stimulation by PCNA. Pol-delta3 and Pol-delta4 are characterized by the absence or the presence of POLD4. They exhibit differences in catalytic activity. Most notably, Pol-delta3 shows higher proofreading activity than Pol-delta4. Although both Pol-delta3 and Pol-delta4 process Okazaki fragments in vitro, Pol-delta3 may also be better suited to fulfill this task, exhibiting near-absence of strand displacement activity compared to Pol-delta4 and stalling on encounter with the 5'-blocking oligonucleotides. Pol-delta3 idling process may avoid the formation of a gap, while maintaining a nick that can be readily ligated. Along with DNA polymerase kappa, DNA polymerase delta carries out approximately half of nucleotide excision repair (NER) synthesis following UV irradiation. In this context, POLD3, along with PCNA and RFC1-replication factor C complex, is required to recruit POLD1, the catalytic subunit of the polymerase delta complex, to DNA damage sites. Under conditions of DNA replication stress, required for the repair of broken replication forks through break-induced replication (BIR). Involved in the translesion synthesis (TLS) of templates carrying O6-methylguanine or abasic sites performed by Pol-delta4, independently of DNA polymerase zeta (REV3L) or eta (POLH). Facilitates abasic site bypass by DNA polymerase delta by promoting extension from the nucleotide inserted opposite the lesion. Also involved in TLS, as a component of the tetrameric DNA polymerase zeta complex. Along with POLD2, dramatically increases the efficiency and processivity of DNA synthesis of the DNA polymerase zeta complex compared to the minimal zeta complex, consisting of only REV3L and REV7. In Mus musculus (Mouse), this protein is DNA polymerase delta subunit 3 (Pold3).